Here is a 207-residue protein sequence, read N- to C-terminus: Phenazine biosynthesis protein PhzD (207 aa).

Asp38 acts as the Proton donor in catalysis. Substrate-binding positions include Gln78, Arg87, Lys122, and 151 to 155 (YAHVG).

The protein belongs to the isochorismatase family. Homodimer.

The catalysed reaction is (2S)-2-amino-4-deoxychorismate + H2O = (5S,6S)-6-amino-5-hydroxycyclohexa-1,3-diene-1-carboxyate + pyruvate. It participates in antibiotic biosynthesis; phenazine biosynthesis. In terms of biological role, involved in the biosynthesis of the antibiotic phenazine, a nitrogen-containing heterocyclic molecule having important roles in virulence, competition and biological control. Catalyzes the hydrolysis of the vinyl ether functional group of 2-amino-2-deoxyisochorismate (ADIC), yielding pyruvate and trans-2,3-dihydro-3-hydroxyanthranilic acid (DHHA). In Pseudomonas fluorescens, this protein is Phenazine biosynthesis protein PhzD.